We begin with the raw amino-acid sequence, 130 residues long: MVQIIFDSKTGNVQRFVNKTDFQLIRKVDETDHVDTPFVLVTYTTNFGQVPASTQSFLEKYAHLLLGVAASGNKVWGDNFAKSADTISRQYQVPILHKFELSGTSKDVELFTQEVERVVTKSSAKMDPVK.

This sequence belongs to the NrdI family.

Its function is as follows. Probably involved in ribonucleotide reductase function. The protein is Protein NrdI of Bacillus velezensis (strain DSM 23117 / BGSC 10A6 / LMG 26770 / FZB42) (Bacillus amyloliquefaciens subsp. plantarum).